The following is a 430-amino-acid chain: Trigger factor (430 aa).

Residues 163–248 (GNIAIIDFKG…IKDIKVKELP (86 aa)) form the PPIase FKBP-type domain.

It belongs to the FKBP-type PPIase family. Tig subfamily.

The protein resides in the cytoplasm. It catalyses the reaction [protein]-peptidylproline (omega=180) = [protein]-peptidylproline (omega=0). In terms of biological role, involved in protein export. Acts as a chaperone by maintaining the newly synthesized protein in an open conformation. Functions as a peptidyl-prolyl cis-trans isomerase. This Clostridium botulinum (strain Loch Maree / Type A3) protein is Trigger factor.